The following is a 206-amino-acid chain: Small ribosomal subunit protein uS4 (206 aa).

Positions N18–K44 are disordered. Positions R94 to V157 constitute an S4 RNA-binding domain.

This sequence belongs to the universal ribosomal protein uS4 family. In terms of assembly, part of the 30S ribosomal subunit. Contacts protein S5. The interaction surface between S4 and S5 is involved in control of translational fidelity.

One of the primary rRNA binding proteins, it binds directly to 16S rRNA where it nucleates assembly of the body of the 30S subunit. Functionally, with S5 and S12 plays an important role in translational accuracy. This Jannaschia sp. (strain CCS1) protein is Small ribosomal subunit protein uS4.